Here is a 457-residue protein sequence, read N- to C-terminus: MEREMLSKTHIMFIPFPAQGHMSPMMQFAKRLAWKGLRITIVLPAQIRDFMQITNPLINTECISFDFDKDDGMPYSMQAYMGVVKLKVTNKLSDLLEKQRTNGYPVNLLVVDSLYPSRVEMCHQLGVKGAPFFTHSCAVGAIYYNARLGKLKIPPEEGLTSVSLPSIPLLGRDDLPIIRTGTFPDLFEHLGNQFSDLDKADWIFFNTFDKLENEEAKWLSSQWPITSIGPLIPSMYLDKQLPNDKDNGINFYKADVGSCIKWLDAKDPGSVVYASFGSVKHNLGDDYMDEVAWGLLHSKYHFIWVVIESERTKLSSDFLAEAEAEEKGLIVSWCPQLQVLSHKSIGSFMTHCGWNSTVEALSLGVPMVALPQQFDQPANAKYIVDVWQIGVRVPIGEEGVVLRGEVANCIKDVMEGEIGDELRGNALKWKGLAVEAMEKGGSSDKNIDEFISKLVSS.

Histidine 21 acts as the Proton acceptor in catalysis. Histidine 21 contacts an anthocyanidin. The Charge relay role is filled by aspartate 112. The UDP-alpha-D-glucose site is built by threonine 134, glutamine 336, histidine 351, tryptophan 354, asparagine 355, serine 356, glutamate 359, aspartate 375, and glutamine 376.

Belongs to the UDP-glycosyltransferase family.

The catalysed reaction is (20S)-protopanaxadiol + UDP-alpha-D-glucose = (20S)-ginsenoside Rh2 + UDP + H(+). It functions in the pathway secondary metabolite biosynthesis; terpenoid biosynthesis. In terms of biological role, component of the triterpene saponins (e.g. PPD-type ginsenosides) biosynthetic pathway. Glycosyltransferase that catalyzes the biosynthesis of ginsenoside Rh2 from protopanaxadiol (PPD). The sequence is that of UDP-glucosyltransferase 45 from Panax ginseng (Korean ginseng).